Reading from the N-terminus, the 181-residue chain is Protein GrpE (181 aa).

The segment covering 1-12 (MENTQENPTTPS) has biased composition (polar residues). The tract at residues 1-33 (MENTQENPTTPSAEDIGSEKQAAQGAAPAAEAA) is disordered. The span at 21 to 33 (QAAQGAAPAAEAA) shows a compositional bias: low complexity.

Belongs to the GrpE family. As to quaternary structure, homodimer.

Its subcellular location is the cytoplasm. Its function is as follows. Participates actively in the response to hyperosmotic and heat shock by preventing the aggregation of stress-denatured proteins, in association with DnaK and GrpE. It is the nucleotide exchange factor for DnaK and may function as a thermosensor. Unfolded proteins bind initially to DnaJ; upon interaction with the DnaJ-bound protein, DnaK hydrolyzes its bound ATP, resulting in the formation of a stable complex. GrpE releases ADP from DnaK; ATP binding to DnaK triggers the release of the substrate protein, thus completing the reaction cycle. Several rounds of ATP-dependent interactions between DnaJ, DnaK and GrpE are required for fully efficient folding. The protein is Protein GrpE of Burkholderia cenocepacia (strain HI2424).